A 152-amino-acid polypeptide reads, in one-letter code: ALK and LTK ligand 1 (152 aa).

The N-terminal stretch at 1–23 is a signal peptide; it reads MRAEKRWHILLSMILLLITSSQC. Intrachain disulfides connect cysteine 113–cysteine 149 and cysteine 127–cysteine 136.

Belongs to the ALKAL family. In terms of tissue distribution, expressed at low level in the notochord and iridophore stripes, the eye and the swim bladder.

The protein localises to the secreted. It is found in the cell membrane. Functionally, cytokine that acts as a physiological ligand for receptor tyrosine kinases LTK and ALK. Required for iridophore development in the adult eye by acting as a receptor for LTK. The chain is ALK and LTK ligand 1 from Danio rerio (Zebrafish).